The primary structure comprises 376 residues: Chorismate synthase ARO2 (376 aa).

Ser2 carries the post-translational modification N-acetylserine. His17 is a catalytic residue. The interval 39–61 is disordered; that stretch reads IQPQLTRRRPGQSKLSTPRDEKD. Catalysis depends on residues His104 and Asp339.

It belongs to the chorismate synthase family. In terms of assembly, homotetramer.

The catalysed reaction is 5-O-(1-carboxyvinyl)-3-phosphoshikimate = chorismate + phosphate. It catalyses the reaction FMNH2 + NADP(+) = FMN + NADPH + 2 H(+). The protein operates within metabolic intermediate biosynthesis; chorismate biosynthesis; chorismate from D-erythrose 4-phosphate and phosphoenolpyruvate: step 7/7. Bifunctional chorismate synthase and flavin reductase that catalyzes the conversion of 5-enolpyruvylshikimate 3-phosphate (EPSP) to form chorismate, which is the last common intermediate in the synthesis of the three aromatic amino acids phenylalanine, tyrosine and tryptophan. Also acts as a flavin reductase (FR) able to generate reduced flavin mononucleotide in the presence of NADPH. The sequence is that of Chorismate synthase ARO2 from Saccharomyces cerevisiae (strain ATCC 204508 / S288c) (Baker's yeast).